Reading from the N-terminus, the 458-residue chain is UDP-N-acetylglucosamine 1-carboxyvinyltransferase (458 aa).

A phosphoenolpyruvate-binding site is contributed by 34 to 35 (KN). Residue Arg-104 participates in UDP-N-acetyl-alpha-D-glucosamine binding. The Proton donor role is filled by Cys-128. Cys-128 carries the 2-(S-cysteinyl)pyruvic acid O-phosphothioketal modification. Residues Asp-320 and Val-342 each contribute to the UDP-N-acetyl-alpha-D-glucosamine site.

The protein belongs to the EPSP synthase family. MurA subfamily.

The protein resides in the cytoplasm. It catalyses the reaction phosphoenolpyruvate + UDP-N-acetyl-alpha-D-glucosamine = UDP-N-acetyl-3-O-(1-carboxyvinyl)-alpha-D-glucosamine + phosphate. It functions in the pathway cell wall biogenesis; peptidoglycan biosynthesis. In terms of biological role, cell wall formation. Adds enolpyruvyl to UDP-N-acetylglucosamine. This is UDP-N-acetylglucosamine 1-carboxyvinyltransferase from Prochlorococcus marinus (strain NATL1A).